A 209-amino-acid polypeptide reads, in one-letter code: Ribosomal RNA large subunit methyltransferase E (209 aa).

S-adenosyl-L-methionine is bound by residues glycine 63, tryptophan 65, aspartate 83, aspartate 99, and aspartate 124. Lysine 164 acts as the Proton acceptor in catalysis.

It belongs to the class I-like SAM-binding methyltransferase superfamily. RNA methyltransferase RlmE family.

It is found in the cytoplasm. It catalyses the reaction uridine(2552) in 23S rRNA + S-adenosyl-L-methionine = 2'-O-methyluridine(2552) in 23S rRNA + S-adenosyl-L-homocysteine + H(+). Specifically methylates the uridine in position 2552 of 23S rRNA at the 2'-O position of the ribose in the fully assembled 50S ribosomal subunit. This is Ribosomal RNA large subunit methyltransferase E from Baumannia cicadellinicola subsp. Homalodisca coagulata.